The sequence spans 100 residues: Large ribosomal subunit protein bL21 (100 aa).

Belongs to the bacterial ribosomal protein bL21 family. Part of the 50S ribosomal subunit. Contacts protein L20.

This protein binds to 23S rRNA in the presence of protein L20. This chain is Large ribosomal subunit protein bL21, found in Mycoplasma genitalium (strain ATCC 33530 / DSM 19775 / NCTC 10195 / G37) (Mycoplasmoides genitalium).